Consider the following 358-residue polypeptide: Peptide chain release factor 2 (358 aa).

N5-methylglutamine is present on Gln-242.

This sequence belongs to the prokaryotic/mitochondrial release factor family. In terms of processing, methylated by PrmC. Methylation increases the termination efficiency of RF2.

It is found in the cytoplasm. Peptide chain release factor 2 directs the termination of translation in response to the peptide chain termination codons UGA and UAA. The polypeptide is Peptide chain release factor 2 (prfB) (Borreliella burgdorferi (strain ATCC 35210 / DSM 4680 / CIP 102532 / B31) (Borrelia burgdorferi)).